The following is a 172-amino-acid chain: NADH-quinone oxidoreductase subunit B (172 aa).

The [4Fe-4S] cluster site is built by Cys-46, Cys-47, Cys-111, and Cys-141.

It belongs to the complex I 20 kDa subunit family. NDH-1 is composed of 14 different subunits. Subunits NuoB, C, D, E, F, and G constitute the peripheral sector of the complex. It depends on [4Fe-4S] cluster as a cofactor.

Its subcellular location is the cell membrane. The enzyme catalyses a quinone + NADH + 5 H(+)(in) = a quinol + NAD(+) + 4 H(+)(out). In terms of biological role, NDH-1 shuttles electrons from NADH, via FMN and iron-sulfur (Fe-S) centers, to quinones in the respiratory chain. The immediate electron acceptor for the enzyme in this species is believed to be a menaquinone. Couples the redox reaction to proton translocation (for every two electrons transferred, four hydrogen ions are translocated across the cytoplasmic membrane), and thus conserves the redox energy in a proton gradient. The polypeptide is NADH-quinone oxidoreductase subunit B (Brevibacillus brevis (strain 47 / JCM 6285 / NBRC 100599)).